The sequence spans 1755 residues: MESQQLSQHSPIFHGSACASVTSKEVQTTQDPLDISASKTEECEKVSTQANSQQPTTPPSSAVPENHHHASPQAAQVPLPQNGPYPQQRMMNTQQANISGWPVYGHPSLMPYPPYQMSPMYAPPGAQSQFTQYPQYVGTHLNTPSPESGNSFPDSSSAKSNMTSTNQHVRPPPILTSPNDFLNWVKIYIKFLQNSNLGDIIPTATRKAVRQMTDDELTFLCHTFQLFAPSQFLPPWVKDILSVDYTDIMKILSKSINKMQSDTQEVNDITTLATLHYNGSTPADAFEAEVTNILDRLNNNGIPINNKVACQFIMRGLSGEYKFLPYARHRCIHMTVADLFSDIHSMYEEQQESKRNKSTYRRSPSDEKKDSRTYTNTTKPKSITRNSQKPNNSQSRTARAHNVSTFNNSPGPDNDLIRGSTTEPIQLKNTHDLHLGQELTESTVNHTNHSDDELPGHLLLDSGASRTLIRSAHHIHSASSNPDINVVDAQKRNIPINAIGDLQFHFQDNTKTSIKVLHTPNIAYDLLSLNELAAVDITACFTKNVLERSDGTVLAPIVKYGDFYWVSKKYLLPSNISVPTINNVHTSESTRKYPYPFIHRMLAHANAQTIRYSLKNNTITYFNESDVDWSSAIDYQCPDCLIGKSTKHRHIKGSRLKYQNSYEPFQYLHTDIFGPVHNLPKSAPSYFISFTDETTKFRWVYPLHDRREDSILDVFTTILAFIKNQFQASVLVIQMDRGSEYTNRTLHKFLEKNGITPCYTTTADSRAHGVAERLNRTLLDDCRTQLQCSGLPNHLWFSAIEFSTIVRNSLASPKSKKSARQHAGLAGLDISTLLPFGQPVIVNDHNPNSKIHPRGIPGYALHPSRNSYGYIIYLPSLKKTVDTTNYVILQGKESRLDQFNYDALTFDEDLNRLTASYQSFIASNEIQQSNDLNIESDHDFQSDIELYPEQPRNVLSKAVSPTDSTPPSTHTEDSKRVSKTNIRAPREVDPNISESNILPSKKRSSTPQISDIESTDSGGMHRLDVPLLAPMSQSNTHESSYASKSKDFRHSDSYSDNETNHTNVPISSTGGTNNKTVPQTSEQETEKRIIHRSPSIDTSSSESNSLHHVVPIKTSDTCPKENTEESIIADLPLPDLPPEPPTELSDSFKELPPINSRQTNSSLGGIGDSNAYTTINSKKRSLEDNETEIKVSRDTWNTKNMRSLEPPRSKKRIHLIAAVKAVKSIKPIRTTLRYDEAITYNKDIKEKEKYIEAYHKEVNQLLKMKTWDTDKYYDRKEIDPKRVINSMFIFNRKRDGTHKARFVARGDIQHPDTYDSGMQSNTVHHYALMTSLSLALDNNYHITQLDISSAYLYADIKEELYIRPPPHLGMNDKLIRLKKSLYGLKQSGANWYETIKSYLIKQCGMEEVRGWSCVFKNSQVTICLFVDDMVLFSKNLNSNKRIIDKLKMQYDTKIINLGESDEEIQYDILGLEIKYQRGKYMKLGMENSLTEKIPKLNVPLNPKGRKLSAPGQPGLYIDQQELELEEDDYKMKVHEMQKLIGLASYVGYKFRFDLLYYINTLAQHILFPSKQVLDMTYELIQFIWNTRDKQLIWHKSKPVKPTNKLVVISDASYGNQPYYKSQIGNIYLLNGKVIGGKSTKASLTCTSTTEAEIHAISESVPLLNNLSYLIQELDKKPITKGLLTDSKSTISIIISNNEEKFRNRFFGTKAMRLRDEVSGNHLHVCYIETKKNIADVMTKPLPIKTFKLLTNKWIH.

Composition is skewed to polar residues over residues 20–31, 46–55, and 137–168; these read SVTSKEVQTTQD, VSTQANSQQP, and VGTH…TNQH. Disordered regions lie at residues 20 to 84, 137 to 173, and 350 to 420; these read SVTS…QNGP, VGTH…RPPP, and QQES…IRGS. Positions 299 to 401 are RNA-binding; it reads NNGIPINNKV…NSQSRTARAH (103 aa). Residues 363 to 372 are compositionally biased toward basic and acidic residues; it reads SPSDEKKDSR. Positions 373–411 are enriched in polar residues; that stretch reads TYTNTTKPKSITRNSQKPNNSQSRTARAHNVSTFNNSPG. The active-site For protease activity; shared with dimeric partner is D461. Residues 583-640 are integrase-type zinc finger-like; that stretch reads NVHTSESTRKYPYPFIHRMLAHANAQTIRYSLKNNTITYFNESDVDWSSAIDYQCPDC. Residues 660-835 form the Integrase catalytic domain; the sequence is NSYEPFQYLH…AGLDISTLLP (176 aa). Residues D671 and D736 each contribute to the Mg(2+) site. The segment at 956–1172 is disordered; the sequence is SKAVSPTDST…LGGIGDSNAY (217 aa). Residues 960–969 are compositionally biased toward low complexity; it reads SPTDSTPPST. 2 stretches are compositionally biased toward polar residues: residues 1005 to 1017 and 1031 to 1043; these read STPQ…STDS and MSQS…SYAS. The span at 1044–1053 shows a compositional bias: basic and acidic residues; the sequence is KSKDFRHSDS. 2 stretches are compositionally biased toward polar residues: residues 1054–1082 and 1095–1106; these read YSDN…QTSE and SIDTSSSESNSL. The Bipartite nuclear localization signal motif lies at 1178-1212; that stretch reads KKRSLEDNETEIKVSRDTWNTKNMRSLEPPRSKKR. A Reverse transcriptase Ty1/copia-type domain is found at 1338 to 1476; it reads NNYHITQLDI…DILGLEIKYQ (139 aa). Mg(2+) is bound by residues D1346, D1427, D1428, D1610, E1652, and D1685. The 143-residue stretch at 1610 to 1752 folds into the RNase H Ty1/copia-type domain; that stretch reads DASYGNQPYY…IKTFKLLTNK (143 aa).

As to quaternary structure, the capsid protein forms a homotrimer, from which the VLPs are assembled. The protease is a homodimer, whose active site consists of two apposed aspartic acid residues. In terms of processing, initially, virus-like particles (VLPs) are composed of the structural unprocessed proteins Gag and Gag-Pol, and also contain the host initiator methionine tRNA (tRNA(i)-Met) which serves as a primer for minus-strand DNA synthesis, and a dimer of genomic Ty RNA. Processing of the polyproteins occurs within the particle and proceeds by an ordered pathway, called maturation. First, the protease (PR) is released by autocatalytic cleavage of the Gag-Pol polyprotein yielding capsid protein p45 and a Pol-p154 precursor protein. This cleavage is a prerequisite for subsequent processing of Pol-p154 at the remaining sites to release the mature structural and catalytic proteins. Maturation takes place prior to the RT reaction and is required to produce transposition-competent VLPs.

Its subcellular location is the cytoplasm. The protein localises to the nucleus. It catalyses the reaction DNA(n) + a 2'-deoxyribonucleoside 5'-triphosphate = DNA(n+1) + diphosphate. It carries out the reaction Endonucleolytic cleavage to 5'-phosphomonoester.. Its function is as follows. Capsid protein (CA) is the structural component of the virus-like particle (VLP), forming the shell that encapsulates the retrotransposons dimeric RNA genome. The particles are assembled from trimer-clustered units and there are holes in the capsid shells that allow for the diffusion of macromolecules. CA also has nucleocapsid-like chaperone activity, promoting primer tRNA(i)-Met annealing to the multipartite primer-binding site (PBS), dimerization of Ty1 RNA and initiation of reverse transcription. In terms of biological role, the aspartyl protease (PR) mediates the proteolytic cleavages of the Gag and Gag-Pol polyproteins after assembly of the VLP. Reverse transcriptase/ribonuclease H (RT) is a multifunctional enzyme that catalyzes the conversion of the retro-elements RNA genome into dsDNA within the VLP. The enzyme displays a DNA polymerase activity that can copy either DNA or RNA templates, and a ribonuclease H (RNase H) activity that cleaves the RNA strand of RNA-DNA heteroduplexes during plus-strand synthesis and hydrolyzes RNA primers. The conversion leads to a linear dsDNA copy of the retrotransposon that includes long terminal repeats (LTRs) at both ends. Functionally, integrase (IN) targets the VLP to the nucleus, where a subparticle preintegration complex (PIC) containing at least integrase and the newly synthesized dsDNA copy of the retrotransposon must transit the nuclear membrane. Once in the nucleus, integrase performs the integration of the dsDNA into the host genome. The protein is Transposon Ty1-BL Gag-Pol polyprotein (TY1B-BL) of Saccharomyces cerevisiae (strain ATCC 204508 / S288c) (Baker's yeast).